We begin with the raw amino-acid sequence, 371 residues long: Germination protease (371 aa).

Positions 1–16 are excised as a propeptide; it reads MEKQKLDLSAYQIRTD.

The protein belongs to the peptidase A25 family. Homotetramer. In terms of processing, autoproteolytically processed. The inactive tetrameric zymogen termed p46 autoprocesses to a smaller form termed p41, which is active only during spore germination.

The enzyme catalyses Endopeptidase action with P4 Glu or Asp, P1 preferably Glu &gt; Asp, P1' hydrophobic and P2' Ala.. In terms of biological role, initiates the rapid degradation of small, acid-soluble proteins during spore germination. The chain is Germination protease from Bacillus pumilus (strain SAFR-032).